Reading from the N-terminus, the 268-residue chain is Proenkephalin-A (268 aa).

The signal sequence occupies residues 1–24 (MARLLRLCTWLVALGPGLLATVQA). Disulfide bonds link Cys26/Cys48, Cys30/Cys52, and Cys33/Cys65. Residues 163–184 (TGDDRDRENHHQEGGDSDEGVS) are disordered. Over residues 164-176 (GDDRDRENHHQEG) the composition is skewed to basic and acidic residues. 2 propeptides span residues 197–208 (SPQVEDEAKELQ) and 218–228 (VGRPEWWMDYQ). A Phosphoserine modification is found at Ser252.

It belongs to the opioid neuropeptide precursor family. Proenkephalin-A is cleaved by CTSL to generate Met-enkephalin. In terms of processing, processed and degraded by ACE. Post-translationally, probably cleaved by ACE. Processed by ACE to generate Met-enkephalin in the nucleus accumbens of the brain. In terms of processing, the N-terminal domain contains 6 conserved cysteines thought to be involved in disulfide bonding and/or processing.

The protein resides in the cytoplasmic vesicle. It is found in the secretory vesicle. Its subcellular location is the chromaffin granule lumen. The protein localises to the secreted. In terms of biological role, neuropeptide that competes with and mimic the effects of opiate drugs. They play a role in a number of physiologic functions, including pain perception and responses to stress. Functionally, met-enkephalin-Arg-Phe neuropeptide acts as a strong ligand of Mu-type opioid receptor OPRM1. Met-enkephalin-Arg-Phe-binding to OPRM1 in the nucleus accumbens of the brain increases activation of OPRM1, leading to long-term synaptic depression of glutamate release. Increases glutamate release in the striatum and decreases GABA concentration in the striatum. Its function is as follows. Increases glutamate release in the striatum. The polypeptide is Proenkephalin-A (PENK) (Cavia porcellus (Guinea pig)).